The primary structure comprises 388 residues: Ectopic P granules protein 6 (388 aa).

Over residues 1–25 (MSKKEETIFFRIEKENRPESSKKEE) the composition is skewed to basic and acidic residues. The interval 1-33 (MSKKEETIFFRIEKENRPESSKKEEDENSTEEM) is disordered. One copy of the WD 1 repeat lies at 217-257 (AHLTDIAQVALNCQGTLVATGSTKGTVIRVFDARTKGPLYE). Residues 258-261 (LRRG) carry the LRRG motif motif. Residues 262 to 301 (TVQAHLQCMAFSPCSSYLAVASDKGTLHMFGIRDAEPQKK) form a WD 2 repeat. Residues 265–328 (AHLQCMAFSP…LDRPVMAIGF (64 aa)) are required for atg-2 binding.

The protein belongs to the WD repeat PROPPIN family. In terms of assembly, interacts with atg-2; the interaction is direct. In terms of tissue distribution, widely expressed in tissues including pharyngeal, muscle and neuronal tissues.

It localises to the cytoplasm. Its subcellular location is the preautophagosomal structure membrane. Functionally, component of the epg-6/atg-2 complex, which is involved in the generation of autophagosomes from omegasomes and in the distribution of atg-9 and atg-13 during the autophagy-mediated degradation of protein aggregates. Binds to phosphatidylinositols on preautophagosomes, which are early autophagic structures, to promote autophagosome formation. In particular, binds with high affinity to phosphatidylinositols including phosphatidylinositol 3-phosphate (PtdIns(3)P) and phosphatidylinositol 5-phosphate (PtdIns(5)P), but more weakly to phosphatidylinositol 4-phosphate (PtdIns(4)P) and phosphatidylinositol 3,5-bisphosphate (PtdIns(3,5)P2). Involved in autophagy-mediated degradation of ribosomal RNA and ribosomal proteins in lysosomes, which is essential for maintaining nucleotide homeostasis. The protein is Ectopic P granules protein 6 of Caenorhabditis elegans.